A 132-amino-acid polypeptide reads, in one-letter code: Ribosome-binding factor A (132 aa).

Belongs to the RbfA family. In terms of assembly, monomer. Binds 30S ribosomal subunits, but not 50S ribosomal subunits or 70S ribosomes.

The protein resides in the cytoplasm. Functionally, one of several proteins that assist in the late maturation steps of the functional core of the 30S ribosomal subunit. Associates with free 30S ribosomal subunits (but not with 30S subunits that are part of 70S ribosomes or polysomes). Required for efficient processing of 16S rRNA. May interact with the 5'-terminal helix region of 16S rRNA. The protein is Ribosome-binding factor A of Pectobacterium carotovorum subsp. carotovorum (strain PC1).